The primary structure comprises 221 residues: ATP-dependent dethiobiotin synthetase BioD (221 aa).

ATP is bound at residue 11–16; that stretch reads DVGKTF. A Mg(2+)-binding site is contributed by Thr15. Lys35 is a catalytic residue. Position 39 (Thr39) interacts with substrate. ATP contacts are provided by residues Asp44 and 103 to 106; that span reads EGAG. Residues Asp44 and Glu103 each contribute to the Mg(2+) site.

This sequence belongs to the dethiobiotin synthetase family. In terms of assembly, homodimer. Requires Mg(2+) as cofactor.

It is found in the cytoplasm. The enzyme catalyses (7R,8S)-7,8-diammoniononanoate + CO2 + ATP = (4R,5S)-dethiobiotin + ADP + phosphate + 3 H(+). Its pathway is cofactor biosynthesis; biotin biosynthesis; biotin from 7,8-diaminononanoate: step 1/2. In terms of biological role, catalyzes a mechanistically unusual reaction, the ATP-dependent insertion of CO2 between the N7 and N8 nitrogen atoms of 7,8-diaminopelargonic acid (DAPA, also called 7,8-diammoniononanoate) to form a ureido ring. In Leptospira interrogans serogroup Icterohaemorrhagiae serovar copenhageni (strain Fiocruz L1-130), this protein is ATP-dependent dethiobiotin synthetase BioD.